The chain runs to 128 residues: Large ribosomal subunit protein bL17 (128 aa).

Belongs to the bacterial ribosomal protein bL17 family. Part of the 50S ribosomal subunit. Contacts protein L32.

The protein is Large ribosomal subunit protein bL17 of Histophilus somni (strain 129Pt) (Haemophilus somnus).